The following is a 444-amino-acid chain: Glutamate--tRNA ligase (444 aa).

Residues 12–22 carry the 'HIGH' region motif; it reads PSPTGFLHVGG. The 'KMSKS' region signature appears at 213-217; it reads KMSKR. Lysine 216 provides a ligand contact to ATP.

Belongs to the class-I aminoacyl-tRNA synthetase family. Glutamate--tRNA ligase type 1 subfamily. In terms of assembly, monomer.

It localises to the cytoplasm. The enzyme catalyses tRNA(Glu) + L-glutamate + ATP = L-glutamyl-tRNA(Glu) + AMP + diphosphate. Catalyzes the attachment of glutamate to tRNA(Glu) in a two-step reaction: glutamate is first activated by ATP to form Glu-AMP and then transferred to the acceptor end of tRNA(Glu). This Methylacidiphilum infernorum (isolate V4) (Methylokorus infernorum (strain V4)) protein is Glutamate--tRNA ligase.